Reading from the N-terminus, the 227-residue chain is Cytochrome c oxidase subunit 2 (227 aa).

Residues 1–26 (MATWSNLSLQDGASPLMEQLSFFHDH) are Mitochondrial intermembrane-facing. The chain crosses the membrane as a helical span at residues 27-48 (TMIDLLLITMIVGYSLSYMLLT). Topologically, residues 49–62 (KYTNRNMLHGHLIE) are mitochondrial matrix. Residues 63–82 (TIWTALPAITLIFIALPSLR) form a helical membrane-spanning segment. Topologically, residues 83-227 (LLYLLDDSSD…LFIKWLSNMM (145 aa)) are mitochondrial intermembrane. The Cu cation site is built by H161, C196, E198, C200, H204, and M207. E198 lines the Mg(2+) pocket.

It belongs to the cytochrome c oxidase subunit 2 family. As to quaternary structure, component of the cytochrome c oxidase (complex IV, CIV), a multisubunit enzyme composed of a catalytic core of 3 subunits and several supernumerary subunits. The complex exists as a monomer or a dimer and forms supercomplexes (SCs) in the inner mitochondrial membrane with ubiquinol-cytochrome c oxidoreductase (cytochrome b-c1 complex, complex III, CIII). Cu cation is required as a cofactor.

It localises to the mitochondrion inner membrane. The enzyme catalyses 4 Fe(II)-[cytochrome c] + O2 + 8 H(+)(in) = 4 Fe(III)-[cytochrome c] + 2 H2O + 4 H(+)(out). Component of the cytochrome c oxidase, the last enzyme in the mitochondrial electron transport chain which drives oxidative phosphorylation. The respiratory chain contains 3 multisubunit complexes succinate dehydrogenase (complex II, CII), ubiquinol-cytochrome c oxidoreductase (cytochrome b-c1 complex, complex III, CIII) and cytochrome c oxidase (complex IV, CIV), that cooperate to transfer electrons derived from NADH and succinate to molecular oxygen, creating an electrochemical gradient over the inner membrane that drives transmembrane transport and the ATP synthase. Cytochrome c oxidase is the component of the respiratory chain that catalyzes the reduction of oxygen to water. Electrons originating from reduced cytochrome c in the intermembrane space (IMS) are transferred via the dinuclear copper A center (CU(A)) of subunit 2 and heme A of subunit 1 to the active site in subunit 1, a binuclear center (BNC) formed by heme A3 and copper B (CU(B)). The BNC reduces molecular oxygen to 2 water molecules using 4 electrons from cytochrome c in the IMS and 4 protons from the mitochondrial matrix. In Locusta migratoria (Migratory locust), this protein is Cytochrome c oxidase subunit 2 (COII).